The following is a 78-amino-acid chain: 4-methyl-3-hydroxyanthranilic acid carrier protein (78 aa).

S33 carries the O-(pantetheine 4'-phosphoryl)serine modification.

The protein belongs to the acyl carrier protein (ACP) family. Post-translationally, 4'-phosphopantetheine is transferred from CoA to a specific serine of the apo-form of this carrier protein.

Its pathway is antibiotic biosynthesis. In terms of biological role, involved in the biosynthesis of actinomycin. Acts as a carrier in the transfer and thioesterification of 4-methyl-3-hydroxyanthranilic acid (4-MHA). This is 4-methyl-3-hydroxyanthranilic acid carrier protein from Streptomyces anulatus (Streptomyces chrysomallus).